A 607-amino-acid chain; its full sequence is Glutamine--fructose-6-phosphate aminotransferase [isomerizing] (607 aa).

Residue Cys-2 is the Nucleophile; for GATase activity of the active site. The region spanning 2-217 (CGIIGILGKK…DGDWAVLTRE (216 aa)) is the Glutamine amidotransferase type-2 domain. SIS domains lie at 277–422 (TVRS…QRGS) and 455–597 (ICRD…VDQP). Lys-602 (for Fru-6P isomerization activity) is an active-site residue.

Homodimer.

It is found in the cytoplasm. The catalysed reaction is D-fructose 6-phosphate + L-glutamine = D-glucosamine 6-phosphate + L-glutamate. In terms of biological role, catalyzes the first step in hexosamine metabolism, converting fructose-6P into glucosamine-6P using glutamine as a nitrogen source. This is Glutamine--fructose-6-phosphate aminotransferase [isomerizing] from Bartonella quintana (strain Toulouse) (Rochalimaea quintana).